Here is a 279-residue protein sequence, read N- to C-terminus: Inhibitor of growth protein 1 (279 aa).

The tract at residues 115-206 (AHQDISDGTG…EASPADLPID (92 aa)) is disordered. A Glycyl lysine isopeptide (Lys-Gly) (interchain with G-Cter in SUMO2) cross-link involves residue Lys-135. Over residues 154–171 (RNNENRENASNNHDHDDI) the composition is skewed to basic and acidic residues. Residues 179-191 (KKAKTSKKKKRSK) are compositionally biased toward basic residues. A PHD-type zinc finger spans residues 210–259 (PTYCLCNQVSYGEMIGCDNDECPIEWFHFSCVGLNHKPKGKWYCPKCRGE). Positions 213, 215, 226, 231, 237, 240, 253, and 256 each coordinate Zn(2+). Residues 262–279 (KTMDKALEKSKKERAYNR) form a PBR region.

Belongs to the ING family. In terms of assembly, interacts with H3K4me3 and to a lesser extent with H3K4me2. Isoform 2 interacts with RSL1D1. In the adult, widely expressed with highest levels in thymus and testis.

The protein resides in the nucleus. Its function is as follows. Isoform 1 inhibits p53-dependent transcriptional activation and may function as an oncoprotein. Isoform 2 acts as a negative growth regulator by cooperating with p53 in transcriptional activation of p53-responsive genes and may act as a tumor suppressor. This chain is Inhibitor of growth protein 1 (Ing1), found in Mus musculus (Mouse).